The primary structure comprises 324 residues: MSILHNIVSKKELKRRMFFETEPRLTLSFYKYFFIKNTQEYRDRLYKTFYKYNVLGRIYVASEGINAQISVPKKYYSILKKFLYNFDIELNNLRINKSLDNEKSFWVLCVKIKKKIVQDGIKEHFFNPNNVGIYIQSEQVNSMLNDKKTIFIDMRNSYEYAIGHFENAIEIKSITFREQLKKVIQLMAYAKNKKIVMYCTGGIRCEKATSWMLFNGFKHVYHLEGGIIGYVHDARKNGLPVLFKGKSFVFDNRMSEKISDEVISYCKQCGKSSDVYINCKYSSCHLLFIQCENCSVKFHSCCSLECMKKYKFYMLNNDLKKISY.

Residues 145 to 239 (NDKKTIFIDM…YVHDARKNGL (95 aa)) enclose the Rhodanese domain. The active-site Cysteine persulfide intermediate is cysteine 199.

The protein belongs to the TrhO family.

The enzyme catalyses uridine(34) in tRNA + AH2 + O2 = 5-hydroxyuridine(34) in tRNA + A + H2O. Catalyzes oxygen-dependent 5-hydroxyuridine (ho5U) modification at position 34 in tRNAs. This chain is tRNA uridine(34) hydroxylase, found in Buchnera aphidicola subsp. Acyrthosiphon pisum (strain APS) (Acyrthosiphon pisum symbiotic bacterium).